The sequence spans 510 residues: NAD(P)H-quinone oxidoreductase subunit 2 A, chloroplastic (510 aa).

The next 13 membrane-spanning stretches (helical) occupy residues 24 to 44, 57 to 77, 99 to 119, 124 to 144, 149 to 169, 183 to 203, 229 to 249, 295 to 315, 323 to 343, 354 to 374, 395 to 415, 418 to 438, and 484 to 504; these read LLLFHGSFIFPECILIFGLIL, IPWLYFISSTSLVMSITALLF, IFQFLILLCSTLCIPLSVEYI, MAITEFLLFVLTATLGGMFLC, LITIFVAPECFSLCSYLLSGY, YLLMGGASSSILVHGFSWLYG, ISIALIFITVGIGFKLSPAPF, WHLLLEILAILSMILGNLIAI, MLAYSSIGQIGYVIIGIIVGD, YMLFYISMNLGTFACIVLFGL, ALSSALCLLSLGGLPPLAGFF, LYLFWCGWQAGLYFLVSIGLL, and MILCVIASTIPGISMNPIIAI.

This sequence belongs to the complex I subunit 2 family. NDH is composed of at least 16 different subunits, 5 of which are encoded in the nucleus.

It localises to the plastid. It is found in the chloroplast thylakoid membrane. It carries out the reaction a plastoquinone + NADH + (n+1) H(+)(in) = a plastoquinol + NAD(+) + n H(+)(out). The enzyme catalyses a plastoquinone + NADPH + (n+1) H(+)(in) = a plastoquinol + NADP(+) + n H(+)(out). Functionally, NDH shuttles electrons from NAD(P)H:plastoquinone, via FMN and iron-sulfur (Fe-S) centers, to quinones in the photosynthetic chain and possibly in a chloroplast respiratory chain. The immediate electron acceptor for the enzyme in this species is believed to be plastoquinone. Couples the redox reaction to proton translocation, and thus conserves the redox energy in a proton gradient. In Piper cenocladum (Ant piper), this protein is NAD(P)H-quinone oxidoreductase subunit 2 A, chloroplastic.